We begin with the raw amino-acid sequence, 131 residues long: Small ribosomal subunit protein uS8 (131 aa).

It belongs to the universal ribosomal protein uS8 family. As to quaternary structure, part of the 30S ribosomal subunit. Contacts proteins S5 and S12.

Functionally, one of the primary rRNA binding proteins, it binds directly to 16S rRNA central domain where it helps coordinate assembly of the platform of the 30S subunit. In Methylobacillus flagellatus (strain ATCC 51484 / DSM 6875 / VKM B-1610 / KT), this protein is Small ribosomal subunit protein uS8.